Here is a 194-residue protein sequence, read N- to C-terminus: Pyridoxine/pyridoxamine 5'-phosphate oxidase (194 aa).

Residues 42-47 (RVVLLK), 57-58 (FT), Arg-63, Lys-64, and Gln-86 contribute to the FMN site. Lys-47 contacts substrate. Positions 104, 108, and 112 each coordinate substrate. FMN contacts are provided by residues 121-122 (QS) and Trp-166. 172 to 174 (RIH) is a substrate binding site. Residue Arg-176 participates in FMN binding.

It belongs to the pyridoxamine 5'-phosphate oxidase family. As to quaternary structure, homodimer. It depends on FMN as a cofactor.

The enzyme catalyses pyridoxamine 5'-phosphate + O2 + H2O = pyridoxal 5'-phosphate + H2O2 + NH4(+). It carries out the reaction pyridoxine 5'-phosphate + O2 = pyridoxal 5'-phosphate + H2O2. It participates in cofactor metabolism; pyridoxal 5'-phosphate salvage; pyridoxal 5'-phosphate from pyridoxamine 5'-phosphate: step 1/1. It functions in the pathway cofactor metabolism; pyridoxal 5'-phosphate salvage; pyridoxal 5'-phosphate from pyridoxine 5'-phosphate: step 1/1. Functionally, catalyzes the oxidation of either pyridoxine 5'-phosphate (PNP) or pyridoxamine 5'-phosphate (PMP) into pyridoxal 5'-phosphate (PLP). The sequence is that of Pyridoxine/pyridoxamine 5'-phosphate oxidase from Ehrlichia ruminantium (strain Welgevonden).